Here is a 520-residue protein sequence, read N- to C-terminus: Peptide chain release factor 3 (520 aa).

The 266-residue stretch at 8–273 (EIRKTFAIIS…AYVDHAPMPS (266 aa)) folds into the tr-type G domain. GTP-binding positions include 17-24 (SHPDAGKT), 85-89 (DTPGH), and 139-142 (NKLD).

This sequence belongs to the TRAFAC class translation factor GTPase superfamily. Classic translation factor GTPase family. PrfC subfamily.

The protein localises to the cytoplasm. Increases the formation of ribosomal termination complexes and stimulates activities of RF-1 and RF-2. It binds guanine nucleotides and has strong preference for UGA stop codons. It may interact directly with the ribosome. The stimulation of RF-1 and RF-2 is significantly reduced by GTP and GDP, but not by GMP. This chain is Peptide chain release factor 3, found in Macrococcus caseolyticus (strain JCSC5402) (Macrococcoides caseolyticum).